Here is a 300-residue protein sequence, read N- to C-terminus: Platelet-derived growth factor D (300 aa).

Positions 1 to 114 (QVTGNGHVQS…PGFKIYYSFV (114 aa)) constitute a CUB domain. Cysteine 53 and cysteine 75 are oxidised to a cystine. Asparagine 220 carries N-linked (GlcNAc...) asparagine glycosylation.

This sequence belongs to the PDGF/VEGF growth factor family. In terms of assembly, homodimer; disulfide-linked. Interacts with PDGFRB homodimers, and with heterodimers formed by PDGFRA and PDGFRB. Activated by proteolytic cleavage. Proteolytic removal of the N-terminal CUB domain releasing the core domain is necessary for unmasking the receptor-binding epitopes of the core domain. Cleavage after Arg-191 or Arg-193 by urokinase plasminogen activator gives rise to the active form.

It is found in the secreted. Growth factor that plays an essential role in the regulation of embryonic development, cell proliferation, cell migration, survival and chemotaxis. Potent mitogen for cells of mesenchymal origin. Plays an important role in wound healing. Induces macrophage recruitment, increased interstitial pressure, and blood vessel maturation during angiogenesis. Can initiate events that lead to a mesangial proliferative glomerulonephritis, including influx of monocytes and macrophages and production of extracellular matrix. This is Platelet-derived growth factor D (PDGFD) from Oryctolagus cuniculus (Rabbit).